A 176-amino-acid chain; its full sequence is Ribonuclease mitogillin (176 aa).

The signal sequence occupies residues 1 to 27; the sequence is MVAIKNLFLLAATAVSVLAAPSPLDAR. 2 disulfide bridges follow: Cys-32–Cys-174 and Cys-102–Cys-158. The active site involves His-76. The active-site Proton acceptor is Glu-122. His-163 acts as the Proton donor in catalysis.

This sequence belongs to the ribonuclease U2 family.

The protein resides in the secreted. Functionally, this purine-specific ribonuclease cleaves 28S RNA in eukaryotic ribosomes, inhibits protein synthesis, and shows antitumor activity. The protein is Ribonuclease mitogillin (mitF) of Aspergillus fumigatus (strain ATCC MYA-4609 / CBS 101355 / FGSC A1100 / Af293) (Neosartorya fumigata).